We begin with the raw amino-acid sequence, 325 residues long: Olfactory receptor 1S1 (325 aa).

The Extracellular portion of the chain corresponds to 1-38 (MKTFSSFLQIGRNMHQGNQTTITEFILLGFFKQDEHQN). Asn-18 carries an N-linked (GlcNAc...) asparagine glycan. A helical transmembrane segment spans residues 39–62 (LLFVLFLGMYLVTVIGNGLIIVAI). Residues 63–70 (SLDTYLHT) lie on the Cytoplasmic side of the membrane. A helical transmembrane segment spans residues 71–92 (PMYLFLANLSFADISSISNSVP). At 93-113 (KMLVNIQTKSQSISYESCITQ) the chain is on the extracellular side. Cys-110 and Cys-202 are oxidised to a cystine. Residues 114 to 133 (MYFSIVFVVIDNLLLGTMAY) traverse the membrane as a helical segment. Topologically, residues 134–152 (DHFVAICHPLNYTILMRPR) are cytoplasmic. The helical transmembrane segment at 153–171 (FGILLTVISWFLSNIIALT) threads the bilayer. At 172–208 (HTLLLIQLLFCNHNTLPHFFCDLAPLLKLSCSDTLIN) the chain is on the extracellular side. Residues 209–232 (ELVLFIVGLSVIIFPFTLSFFSYV) form a helical membrane-spanning segment. The Cytoplasmic segment spans residues 233–249 (CIIRAVLRVSSTQGKWK). The chain crosses the membrane as a helical span at residues 250-272 (AFSTCGSHLTVVLLFYGTIVGVY). Residues 273-285 (FFPSSTHPEDTDK) lie on the Extracellular side of the membrane. A helical membrane pass occupies residues 286–305 (IGAVLFTVVTPMINPFIYSL). Over 306–325 (RNKDMKGALRKLINRKISSL) the chain is Cytoplasmic.

It belongs to the G-protein coupled receptor 1 family.

It localises to the cell membrane. Its function is as follows. Odorant receptor. The chain is Olfactory receptor 1S1 (OR1S1) from Homo sapiens (Human).